The primary structure comprises 323 residues: Ankyrin repeat and SOCS box protein 11 (323 aa).

7 ANK repeats span residues 64 to 93 (ADRS…NVNL), 97 to 126 (NRVS…HVNA), 130 to 159 (HGAT…KAQL), 162 to 191 (YLAS…NIEQ), 195 to 224 (QLGT…SVDH), 227 to 256 (WLDT…NLNL), and 260 to 289 (QGKS…ALSQ). The SOCS box domain maps to 273–323 (SVRQALLLHEGPPALSQLCRLCVRKCLGRTCHHAIYALGLPESLEKFLLYQ).

It belongs to the ankyrin SOCS box (ASB) family. Substrate-recognition component of the ECS(ASB11) complex, composed of ASB11, CUL5, ELOB, ELOC and RNF7/RBX2.

It localises to the endoplasmic reticulum. The protein operates within protein modification; protein ubiquitination. Substrate-recognition component of a cullin-5-RING E3 ubiquitin-protein ligase complex (ECS complex, also named CRL5 complex), which mediates the ubiquitination and subsequent proteasomal degradation of target proteins, such as BIK, DIRAS2 and RPN1. The ECS(ASB11) complex acts as a regulator of the endoplasmic reticulum unfolded protein response by mediating ubiquitination and degradation of BIK. The sequence is that of Ankyrin repeat and SOCS box protein 11 (Asb11) from Mus musculus (Mouse).